Consider the following 435-residue polypeptide: Serine--tRNA ligase (435 aa).

Residue 242 to 244 (TAE) coordinates L-serine. 273–275 (RSE) provides a ligand contact to ATP. Residue E296 participates in L-serine binding. 360–363 (EISS) lines the ATP pocket. S396 is a binding site for L-serine.

Belongs to the class-II aminoacyl-tRNA synthetase family. Type-1 seryl-tRNA synthetase subfamily. In terms of assembly, homodimer. The tRNA molecule binds across the dimer.

The protein localises to the cytoplasm. The enzyme catalyses tRNA(Ser) + L-serine + ATP = L-seryl-tRNA(Ser) + AMP + diphosphate + H(+). The catalysed reaction is tRNA(Sec) + L-serine + ATP = L-seryl-tRNA(Sec) + AMP + diphosphate + H(+). Its pathway is aminoacyl-tRNA biosynthesis; selenocysteinyl-tRNA(Sec) biosynthesis; L-seryl-tRNA(Sec) from L-serine and tRNA(Sec): step 1/1. Its function is as follows. Catalyzes the attachment of serine to tRNA(Ser). Is also able to aminoacylate tRNA(Sec) with serine, to form the misacylated tRNA L-seryl-tRNA(Sec), which will be further converted into selenocysteinyl-tRNA(Sec). The chain is Serine--tRNA ligase from Vibrio atlanticus (strain LGP32) (Vibrio splendidus (strain Mel32)).